Consider the following 159-residue polypeptide: Urease accessory protein UreE (159 aa).

The protein belongs to the UreE family.

The protein resides in the cytoplasm. Its function is as follows. Involved in urease metallocenter assembly. Binds nickel. Probably functions as a nickel donor during metallocenter assembly. This is Urease accessory protein UreE from Acinetobacter baylyi (strain ATCC 33305 / BD413 / ADP1).